The following is a 611-amino-acid chain: Dihydroxy-acid dehydratase (611 aa).

Asp81 serves as a coordination point for Mg(2+). Cys122 provides a ligand contact to [2Fe-2S] cluster. Asp123 and Lys124 together coordinate Mg(2+). An N6-carboxylysine modification is found at Lys124. Position 195 (Cys195) interacts with [2Fe-2S] cluster. Residue Glu491 coordinates Mg(2+). Catalysis depends on Ser517, which acts as the Proton acceptor.

Belongs to the IlvD/Edd family. In terms of assembly, homodimer. [2Fe-2S] cluster serves as cofactor. Mg(2+) is required as a cofactor.

It catalyses the reaction (2R)-2,3-dihydroxy-3-methylbutanoate = 3-methyl-2-oxobutanoate + H2O. The catalysed reaction is (2R,3R)-2,3-dihydroxy-3-methylpentanoate = (S)-3-methyl-2-oxopentanoate + H2O. Its pathway is amino-acid biosynthesis; L-isoleucine biosynthesis; L-isoleucine from 2-oxobutanoate: step 3/4. It participates in amino-acid biosynthesis; L-valine biosynthesis; L-valine from pyruvate: step 3/4. Functionally, functions in the biosynthesis of branched-chain amino acids. Catalyzes the dehydration of (2R,3R)-2,3-dihydroxy-3-methylpentanoate (2,3-dihydroxy-3-methylvalerate) into 2-oxo-3-methylpentanoate (2-oxo-3-methylvalerate) and of (2R)-2,3-dihydroxy-3-methylbutanoate (2,3-dihydroxyisovalerate) into 2-oxo-3-methylbutanoate (2-oxoisovalerate), the penultimate precursor to L-isoleucine and L-valine, respectively. This chain is Dihydroxy-acid dehydratase, found in Brucella suis (strain ATCC 23445 / NCTC 10510).